Reading from the N-terminus, the 575-residue chain is Epsin-1 (575 aa).

5 residues coordinate a 1,2-diacyl-sn-glycero-3-phospho-(1D-myo-inositol-4,5-bisphosphate): Lys-11, Arg-25, Asn-30, Arg-63, and His-73. Residues 12–144 form the ENTH domain; that stretch reads NIVHNYSEAE…RDEDRLREER (133 aa). Residues 150 to 186 form a disordered region; the sequence is TKEKLAQTATASSAAVGSGPPPEAEQAWPQSSGEEEL. Low complexity predominate over residues 157–167; sequence TATASSAAVGS. UIM domains follow at residues 183 to 202, 208 to 227, and 233 to 252; these read EEEL…ADQP, EDDV…HDKE, and GDDL…TGGK. The tract at residues 264–575 is disordered; that stretch reads FTTPAPPQAS…PAPNTNPFLL (312 aa). 8 consecutive repeat copies span residues 274-276, 294-296, 306-308, 319-321, 332-334, 349-351, 367-369, and 377-379. An 8 X 3 AA repeats of D-P-W region spans residues 274–379; it reads DPWGGPASVP…APAPAFSDPW (106 aa). 2 stretches are compositionally biased toward low complexity: residues 279 to 299 and 306 to 316; these read PASV…WGGP and DPWGGAAPTPA. The span at 332 to 346 shows a compositional bias: low complexity; the sequence is DPWGGTPAPAAGEGP. Low complexity predominate over residues 367–379; it reads DPWAPAPAFSDPW. Ser-382 carries the phosphoserine modification. A [DE]-X(1,2)-F-X-X-[FL]-X-X-X-R motif motif is present at residues 401–410; that stretch reads DEFSDFDRLR. Phosphoserine occurs at positions 418 and 419. Position 420 is a phosphothreonine (Thr-420). Residues Ser-434, Ser-446, and Ser-453 each carry the phosphoserine modification. Pro residues predominate over residues 453 to 467; sequence SPPPAATPTPTPPTR. Residues Thr-459, Thr-463, and Thr-469 each carry the phosphothreonine modification. The residue at position 472 (Ser-472) is a Phosphoserine. At Thr-493 the chain carries Phosphothreonine. 2 consecutive repeat copies span residues 501 to 503 and 517 to 519. Residues 501 to 573 are 3 X 3 AA repeats of N-P-F; it reads NPFLPSGAPP…GPPAPNTNPF (73 aa). Arg-533 carries the post-translational modification Omega-N-methylarginine. Pro residues predominate over residues 556–569; sequence GLPPMMPPGPPAPN. Copy 3 of the repeat occupies 571-573; it reads NPF.

This sequence belongs to the epsin family. As to quaternary structure, monomer. Binds clathrin and ZBTB16/ZNF145. Binds ubiquitinated proteins. Interacts with RALBP1 in a complex also containing NUMB and TFAP2A during interphase and mitosis. Interacts with AP2B1. Interacts with UBQLN2. Interacts with ITSN1. Interacts with AP2A1 and AP2A2. Interacts with REPS2; the interaction is direct. Interacts with EPS15; the interaction is direct. Interacts with ENTREP1. In terms of processing, phosphorylated on serine and/or threonine residues in mitotic cells. Phosphorylation reduces interaction with REPS2, AP-2 and the membrane fraction. Depolarization of synaptosomes results in dephosphorylation. Ubiquitinated.

The protein localises to the cytoplasm. Its subcellular location is the cell membrane. It localises to the nucleus. The protein resides in the membrane. It is found in the clathrin-coated pit. In terms of biological role, binds to membranes enriched in phosphatidylinositol 4,5-bisphosphate (PtdIns(4,5)P2). Modifies membrane curvature and facilitates the formation of clathrin-coated invaginations. Regulates receptor-mediated endocytosis. The chain is Epsin-1 (Epn1) from Mus musculus (Mouse).